Here is a 290-residue protein sequence, read N- to C-terminus: Ribosomal protein L11 methyltransferase (290 aa).

Thr-135, Gly-158, Asp-180, and Asn-227 together coordinate S-adenosyl-L-methionine.

Belongs to the methyltransferase superfamily. PrmA family.

Its subcellular location is the cytoplasm. It catalyses the reaction L-lysyl-[protein] + 3 S-adenosyl-L-methionine = N(6),N(6),N(6)-trimethyl-L-lysyl-[protein] + 3 S-adenosyl-L-homocysteine + 3 H(+). In terms of biological role, methylates ribosomal protein L11. The sequence is that of Ribosomal protein L11 methyltransferase from Chelativorans sp. (strain BNC1).